The primary structure comprises 382 residues: Flap endonuclease 1 (382 aa).

Residues 1–105 are N-domain; it reads MGIKGLNAII…HELTKRSSRR (105 aa). Mg(2+) is bound at residue aspartate 34. Arginine 47 and arginine 71 together coordinate DNA. Residues aspartate 87, glutamate 156, glutamate 158, aspartate 177, and aspartate 179 each contribute to the Mg(2+) site. An I-domain region spans residues 120–251; it reads EKMKQERRLV…VTALKLIKTH (132 aa). Residue glutamate 156 participates in DNA binding. DNA contacts are provided by glycine 229 and aspartate 231. Aspartate 231 provides a ligand contact to Mg(2+). The interaction with PCNA stretch occupies residues 339-347; that stretch reads IQGRLDGFF. Residues 358–382 form a disordered region; the sequence is AAAAKRAQENKKLNKNKNKVTKGRR. Residues 370-382 show a composition bias toward basic residues; that stretch reads LNKNKNKVTKGRR.

Belongs to the XPG/RAD2 endonuclease family. FEN1 subfamily. In terms of assembly, interacts with PCNA. Three molecules of RAD27 bind to one PCNA trimer with each molecule binding to one PCNA monomer. PCNA stimulates the nuclease activity without altering cleavage specificity. The cofactor is Mg(2+). In terms of processing, phosphorylated. Phosphorylation upon DNA damage induces relocalization to the nuclear plasma.

The protein resides in the nucleus. The protein localises to the nucleolus. It localises to the nucleoplasm. It is found in the mitochondrion. In terms of biological role, structure-specific nuclease with 5'-flap endonuclease and 5'-3' exonuclease activities involved in DNA replication and repair. During DNA replication, cleaves the 5'-overhanging flap structure that is generated by displacement synthesis when DNA polymerase encounters the 5'-end of a downstream Okazaki fragment. It enters the flap from the 5'-end and then tracks to cleave the flap base, leaving a nick for ligation. Also involved in the long patch base excision repair (LP-BER) pathway, by cleaving within the apurinic/apyrimidinic (AP) site-terminated flap. Acts as a genome stabilization factor that prevents flaps from equilibrating into structures that lead to duplications and deletions. Also possesses 5'-3' exonuclease activity on nicked or gapped double-stranded DNA, and exhibits RNase H activity. Also involved in replication and repair of rDNA and in repairing mitochondrial DNA. The chain is Flap endonuclease 1 from Saccharomyces cerevisiae (strain RM11-1a) (Baker's yeast).